A 367-amino-acid chain; its full sequence is Glutamate 5-kinase (367 aa).

Lys9 is a binding site for ATP. Substrate contacts are provided by Ser49, Asp136, and Asn148. ATP is bound by residues 168-169 and 210-216; these read TD and TGGMKSK. The region spanning 276–350 is the PUA domain; that stretch reads SGQIEVDAGA…GMQSQDIQAR (75 aa).

The protein belongs to the glutamate 5-kinase family.

It is found in the cytoplasm. It catalyses the reaction L-glutamate + ATP = L-glutamyl 5-phosphate + ADP. It participates in amino-acid biosynthesis; L-proline biosynthesis; L-glutamate 5-semialdehyde from L-glutamate: step 1/2. Catalyzes the transfer of a phosphate group to glutamate to form L-glutamate 5-phosphate. In Bacillus mycoides (strain KBAB4) (Bacillus weihenstephanensis), this protein is Glutamate 5-kinase.